The chain runs to 480 residues: Glycogen synthase (480 aa).

Position 15 (Lys15) interacts with ADP-alpha-D-glucose.

Belongs to the glycosyltransferase 1 family. Bacterial/plant glycogen synthase subfamily.

The catalysed reaction is [(1-&gt;4)-alpha-D-glucosyl](n) + ADP-alpha-D-glucose = [(1-&gt;4)-alpha-D-glucosyl](n+1) + ADP + H(+). Its pathway is glycan biosynthesis; glycogen biosynthesis. Functionally, synthesizes alpha-1,4-glucan chains using ADP-glucose. The polypeptide is Glycogen synthase (Clostridioides difficile (strain 630) (Peptoclostridium difficile)).